A 124-amino-acid chain; its full sequence is S-adenosylmethionine decarboxylase proenzyme (124 aa).

Catalysis depends on S63, which acts as the Schiff-base intermediate with substrate; via pyruvic acid. Residue S63 is modified to Pyruvic acid (Ser); by autocatalysis. H68 acts as the Proton acceptor; for processing activity in catalysis. Residue C83 is the Proton donor; for catalytic activity of the active site.

Belongs to the prokaryotic AdoMetDC family. Type 1 subfamily. Heterotetramer of two alpha and two beta chains arranged as a dimer of alpha/beta heterodimers. Requires pyruvate as cofactor. In terms of processing, is synthesized initially as an inactive proenzyme. Formation of the active enzyme involves a self-maturation process in which the active site pyruvoyl group is generated from an internal serine residue via an autocatalytic post-translational modification. Two non-identical subunits are generated from the proenzyme in this reaction, and the pyruvate is formed at the N-terminus of the alpha chain, which is derived from the carboxyl end of the proenzyme. The post-translation cleavage follows an unusual pathway, termed non-hydrolytic serinolysis, in which the side chain hydroxyl group of the serine supplies its oxygen atom to form the C-terminus of the beta chain, while the remainder of the serine residue undergoes an oxidative deamination to produce ammonia and the pyruvoyl group blocking the N-terminus of the alpha chain.

The catalysed reaction is S-adenosyl-L-methionine + H(+) = S-adenosyl 3-(methylsulfanyl)propylamine + CO2. It functions in the pathway amine and polyamine biosynthesis; S-adenosylmethioninamine biosynthesis; S-adenosylmethioninamine from S-adenosyl-L-methionine: step 1/1. Catalyzes the decarboxylation of S-adenosylmethionine to S-adenosylmethioninamine (dcAdoMet), the propylamine donor required for the synthesis of the polyamines spermine and spermidine from the diamine putrescine. In Anoxybacillus flavithermus (strain DSM 21510 / WK1), this protein is S-adenosylmethionine decarboxylase proenzyme.